We begin with the raw amino-acid sequence, 623 residues long: Phosphomethylpyrimidine synthase (623 aa).

Residues Asn221, Met250, Tyr279, His315, 335–337 (SRG), 376–379 (DGLR), and Glu415 each bind substrate. Position 419 (His419) interacts with Zn(2+). Tyr442 contributes to the substrate binding site. His483 is a Zn(2+) binding site. Residues Cys563, Cys566, and Cys571 each coordinate [4Fe-4S] cluster.

This sequence belongs to the ThiC family. In terms of assembly, homodimer. [4Fe-4S] cluster serves as cofactor.

It catalyses the reaction 5-amino-1-(5-phospho-beta-D-ribosyl)imidazole + S-adenosyl-L-methionine = 4-amino-2-methyl-5-(phosphooxymethyl)pyrimidine + CO + 5'-deoxyadenosine + formate + L-methionine + 3 H(+). The protein operates within cofactor biosynthesis; thiamine diphosphate biosynthesis. In terms of biological role, catalyzes the synthesis of the hydroxymethylpyrimidine phosphate (HMP-P) moiety of thiamine from aminoimidazole ribotide (AIR) in a radical S-adenosyl-L-methionine (SAM)-dependent reaction. The protein is Phosphomethylpyrimidine synthase of Parvibaculum lavamentivorans (strain DS-1 / DSM 13023 / NCIMB 13966).